The following is an 87-amino-acid chain: Stannin (87 aa).

Residues 1 to 10 (MSIMDHSPTT) are Mitochondrial intermembrane-facing. A helical membrane pass occupies residues 11–31 (GVVTVIVILIAIAALGALILG). Topologically, residues 32–87 (CWCYLRLQRISQSEDEESIVGDGETKEPFLLVQYSAKGPCVERKAKLTPNGPEVHS) are cytoplasmic. Ser49 carries the post-translational modification Phosphoserine.

This sequence belongs to the stannin family. In terms of assembly, monomer.

It is found in the mitochondrion outer membrane. Its function is as follows. Plays a role in the toxic effects of organotins. Plays a role in endosomal maturation. This chain is Stannin (SNN), found in Bos taurus (Bovine).